The following is a 150-amino-acid chain: Macrodomain Ter protein (150 aa).

The protein belongs to the MatP family. Homodimer.

The protein resides in the cytoplasm. Required for spatial organization of the terminus region of the chromosome (Ter macrodomain) during the cell cycle. Prevents early segregation of duplicated Ter macrodomains during cell division. Binds specifically to matS, which is a 13 bp signature motif repeated within the Ter macrodomain. This is Macrodomain Ter protein from Escherichia coli O81 (strain ED1a).